The chain runs to 492 residues: Signal transduction histidine-protein kinase/phosphatase MprB (492 aa).

Residues 1-27 (MAFPPNSWRPTGPLPTSSLSLRWRVMM) are Cytoplasmic-facing. A helical membrane pass occupies residues 28–48 (LAMSMVALVVVLMAVAVYAVV). Residues 49–165 (SRALYDDLDN…TVQVLRRLGT (117 aa)) lie on the Extracellular side of the membrane. The chain crosses the membrane as a helical span at residues 166–186 (VLLIVGGIGVAVAAIAGGAVA). In terms of domain architecture, HAMP spans 187–239 (RAGLRPVGRLTEAAERVARTDDLRPIPVVGSDELARLTEAFNMMLRALAESRE). Over 187 to 492 (RAGLRPVGRL…DRGGHTVATE (306 aa)) the chain is Cytoplasmic. Residues 247 to 467 (DAGHELRTPL…SVHMLLPGQR (221 aa)) form the Histidine kinase domain. A Phosphohistidine; by autocatalysis modification is found at His250. A disordered region spans residues 470-492 (DPGATRSAEGFVDDRGGHTVATE).

The cofactor is Mg(2+). Mn(2+) is required as a cofactor. Post-translationally, autophosphorylated.

The protein resides in the cell membrane. The enzyme catalyses ATP + protein L-histidine = ADP + protein N-phospho-L-histidine.. Member of the two-component regulatory system MprB/MprA which contributes to maintaining a balance among several systems involved in stress resistance and is required for establishment and maintenance of persistent infection in the host. In response to environmental signals MprB acts both as a membrane-associated protein kinase that undergoes autophosphorylation and subsequently transfers the phosphate to MprA, and a protein phosphatase that dephosphorylates phospho-MprA. The chain is Signal transduction histidine-protein kinase/phosphatase MprB (mprB) from Mycolicibacterium smegmatis (strain ATCC 700084 / mc(2)155) (Mycobacterium smegmatis).